The following is a 318-amino-acid chain: MSVVVYAPASIGNVSVGFDVLGAAVSPIDGTLLGDRVKVEAGAEAFTLKTAGRFVDKLPANPQENIVYDCWQVFARELEKKSVVLKPLTMTLEKNMPIGSGLGSSACSIVAALDALNQFHASPLDETELLALMGEMEGKISGSIHYDNVAPCYLGGVQLMLEELGIISQSVPSFDDWYWVMAYPGIKVSTAEARAILPAQYRRQDIVAHGRYLAGFIHACHTQQPELAAKMIKDVIAEPYREKLLPGFAKARSYAAAAGALATGISGSGPTLFSVCKEQAVAERVARWLEQNYVQNEEGFVHICRLDKQGSKVTGSEL.

Pro97–Cys107 lines the ATP pocket.

This sequence belongs to the GHMP kinase family. Homoserine kinase subfamily.

Its subcellular location is the cytoplasm. It catalyses the reaction L-homoserine + ATP = O-phospho-L-homoserine + ADP + H(+). It participates in amino-acid biosynthesis; L-threonine biosynthesis; L-threonine from L-aspartate: step 4/5. In terms of biological role, catalyzes the ATP-dependent phosphorylation of L-homoserine to L-homoserine phosphate. The protein is Homoserine kinase of Vibrio cholerae serotype O1 (strain ATCC 39541 / Classical Ogawa 395 / O395).